A 345-amino-acid chain; its full sequence is Acyl-CoA--sterol O-acyltransferase 1 (345 aa).

A run of 9 helical transmembrane segments spans residues 1–21, 32–52, 54–74, 86–106, 120–140, 148–168, 231–251, 258–278, and 291–311; these read MASF…TFFI, LILF…IYSL, LLGI…LLFA, PLSL…QLSP, GPLI…AYEY, VVLT…LAAT, ILAA…IFFY, DWKM…EIAI, and AISQ…LFLP.

It belongs to the wax synthase family.

The protein resides in the membrane. In terms of biological role, involved in the esterification of cycloartenol. Not implicated in the formation of sterol esters in flowers or during seed maturation. Has a substrate preference toward saturated fatty acyl donors (16:0 &gt; 18:0 &gt; 16:1 &gt; 18:1). Does not require triacyglycerols (TAGs) as a fatty acyl donor, and is unable to acylate diacylglycerol to produce TAG. This chain is Acyl-CoA--sterol O-acyltransferase 1 (ASAT1), found in Arabidopsis thaliana (Mouse-ear cress).